Consider the following 182-residue polypeptide: MDSVVFYMKVNVGSGNPVKVRATENVLGLIYGNVEVRGVEVESGVPDQPVGLEETVRGAVNRARRAFRDCELSVGIESGLHRVPETITGFVDLQWCAIYDGEHITLGVSAGFEYPPMVVEEVLAGREVGDVMDELTGVDELGRKRGAVSFLSGGLLDRTGNTEQCVLMAMIPRMNPSLYGLK.

Mg(2+) is bound by residues E42 and D69.

The protein belongs to the YjjX NTPase family. In terms of assembly, homodimer. Mg(2+) serves as cofactor. Requires Mn(2+) as cofactor.

The catalysed reaction is XTP + H2O = XDP + phosphate + H(+). It carries out the reaction ITP + H2O = IDP + phosphate + H(+). Its function is as follows. Phosphatase that hydrolyzes non-canonical purine nucleotides such as XTP and ITP to their respective diphosphate derivatives. Probably excludes non-canonical purines from DNA/RNA precursor pool, thus preventing their incorporation into DNA/RNA and avoiding chromosomal lesions. The protein is Probable inosine/xanthosine triphosphatase of Methanothermobacter thermautotrophicus (strain ATCC 29096 / DSM 1053 / JCM 10044 / NBRC 100330 / Delta H) (Methanobacterium thermoautotrophicum).